The primary structure comprises 255 residues: Ribose-5-phosphate isomerase (255 aa).

The protein belongs to the ribose 5-phosphate isomerase family.

It is found in the cytoplasm. It carries out the reaction aldehydo-D-ribose 5-phosphate = D-ribulose 5-phosphate. It participates in carbohydrate degradation; pentose phosphate pathway; D-ribose 5-phosphate from D-ribulose 5-phosphate (non-oxidative stage): step 1/1. The chain is Ribose-5-phosphate isomerase (RKI1) from Eremothecium gossypii (strain ATCC 10895 / CBS 109.51 / FGSC 9923 / NRRL Y-1056) (Yeast).